Consider the following 429-residue polypeptide: Enolase (429 aa).

A (2R)-2-phosphoglycerate-binding site is contributed by Q163. E205 functions as the Proton donor in the catalytic mechanism. Residues D242, E287, and D314 each coordinate Mg(2+). (2R)-2-phosphoglycerate is bound by residues K339, R368, S369, and K390. The active-site Proton acceptor is the K339.

The protein belongs to the enolase family. The cofactor is Mg(2+).

It is found in the cytoplasm. It localises to the secreted. Its subcellular location is the cell surface. The catalysed reaction is (2R)-2-phosphoglycerate = phosphoenolpyruvate + H2O. The protein operates within carbohydrate degradation; glycolysis; pyruvate from D-glyceraldehyde 3-phosphate: step 4/5. In terms of biological role, catalyzes the reversible conversion of 2-phosphoglycerate (2-PG) into phosphoenolpyruvate (PEP). It is essential for the degradation of carbohydrates via glycolysis. The chain is Enolase from Anaeromyxobacter dehalogenans (strain 2CP-1 / ATCC BAA-258).